A 142-amino-acid polypeptide reads, in one-letter code: MPTPSMEDYIEKIYSLIETKGYARVSDIADELFVHPSSVTKMVQKLDKDEYLIYEKYRGLILTPKGTQMGKRLLERHALLESFLSIIGVDPSHIYHDVEGIEHHLSWNSIDRIGDVVQFFENHPDALKTLKAMETTKPETKE.

The HTH dtxR-type domain maps to 1–63 (MPTPSMEDYI…YEKYRGLILT (63 aa)). The Mn(2+) site is built by Asp-8, Glu-11, His-77, Glu-99, Glu-102, and His-103.

Belongs to the DtxR/MntR family. As to quaternary structure, homodimer.

The protein resides in the cytoplasm. DNA binding is strongly activated by Mn(2+). Functionally, central regulator of manganese homeostasis. The polypeptide is HTH-type transcriptional regulator MntR (Listeria monocytogenes serotype 4b (strain F2365)).